Here is a 184-residue protein sequence, read N- to C-terminus: Probable RNA 2'-phosphotransferase (184 aa).

It belongs to the KptA/TPT1 family.

In terms of biological role, removes the 2'-phosphate from RNA via an intermediate in which the phosphate is ADP-ribosylated by NAD followed by a presumed transesterification to release the RNA and generate ADP-ribose 1''-2''-cyclic phosphate (APPR&gt;P). May function as an ADP-ribosylase. This is Probable RNA 2'-phosphotransferase from Escherichia coli (strain 55989 / EAEC).